The sequence spans 357 residues: Alanine racemase (357 aa).

The active-site Proton acceptor; specific for D-alanine is the Lys35. Lys35 carries the post-translational modification N6-(pyridoxal phosphate)lysine. Arg131 contacts substrate. Residue Tyr256 is the Proton acceptor; specific for L-alanine of the active site. Met304 provides a ligand contact to substrate.

The protein belongs to the alanine racemase family. The cofactor is pyridoxal 5'-phosphate.

It catalyses the reaction L-alanine = D-alanine. The protein operates within amino-acid biosynthesis; D-alanine biosynthesis; D-alanine from L-alanine: step 1/1. In terms of biological role, catalyzes the interconversion of L-alanine and D-alanine. May also act on other amino acids. The polypeptide is Alanine racemase (alr) (Legionella pneumophila (strain Lens)).